The primary structure comprises 397 residues: Chalcone synthase 2 (397 aa).

The active site involves Cys-168.

The protein belongs to the thiolase-like superfamily. Chalcone/stilbene synthases family.

The enzyme catalyses (E)-4-coumaroyl-CoA + 3 malonyl-CoA + 3 H(+) = 2',4,4',6'-tetrahydroxychalcone + 3 CO2 + 4 CoA. The protein operates within secondary metabolite biosynthesis; flavonoid biosynthesis. The primary product of this enzyme is 4,2',4',6'-tetrahydroxychalcone (also termed naringenin-chalcone or chalcone) which can under specific conditions spontaneously isomerize into naringenin. This Daucus carota (Wild carrot) protein is Chalcone synthase 2 (CHS2).